Consider the following 360-residue polypeptide: Phospho-N-acetylmuramoyl-pentapeptide-transferase (360 aa).

The next 10 helical transmembrane spans lie at 26-46 (AILS…IMIK), 70-90 (GTPT…ILLW), 94-114 (SNPY…IGFV), 132-152 (WKYF…YAYG), 168-188 (IMPQ…VGTS), 199-219 (GLAI…AWAT), 236-256 (ASEL…FLWF), 263-283 (VFMG…IAVL), 288-308 (LILV…ILQV), and 338-358 (VIVR…ATLK).

The protein belongs to the glycosyltransferase 4 family. MraY subfamily. Requires Mg(2+) as cofactor.

Its subcellular location is the cell inner membrane. It catalyses the reaction UDP-N-acetyl-alpha-D-muramoyl-L-alanyl-gamma-D-glutamyl-meso-2,6-diaminopimeloyl-D-alanyl-D-alanine + di-trans,octa-cis-undecaprenyl phosphate = di-trans,octa-cis-undecaprenyl diphospho-N-acetyl-alpha-D-muramoyl-L-alanyl-D-glutamyl-meso-2,6-diaminopimeloyl-D-alanyl-D-alanine + UMP. The protein operates within cell wall biogenesis; peptidoglycan biosynthesis. Catalyzes the initial step of the lipid cycle reactions in the biosynthesis of the cell wall peptidoglycan: transfers peptidoglycan precursor phospho-MurNAc-pentapeptide from UDP-MurNAc-pentapeptide onto the lipid carrier undecaprenyl phosphate, yielding undecaprenyl-pyrophosphoryl-MurNAc-pentapeptide, known as lipid I. This is Phospho-N-acetylmuramoyl-pentapeptide-transferase from Vibrio campbellii (strain ATCC BAA-1116).